Here is a 105-residue protein sequence, read N- to C-terminus: MKTVGLYLLTALAEILGCYLPYLWLRQGASPWVLLPGAASLAVFAWLLTLHPDASGRVYAAYGGVYIAMAIAWLWAVDGVRPSPWDIAGVAVALGGMAIIVFQPR.

4 consecutive transmembrane segments (helical) span residues 4-24 (VGLY…PYLW), 28-48 (GASP…AWLL), 60-80 (AAYG…VDGV), and 82-102 (PSPW…IIVF).

Belongs to the UPF0060 family.

It is found in the cell inner membrane. The chain is UPF0060 membrane protein Rmet_4032 from Cupriavidus metallidurans (strain ATCC 43123 / DSM 2839 / NBRC 102507 / CH34) (Ralstonia metallidurans).